We begin with the raw amino-acid sequence, 215 residues long: Mediator of RNA polymerase II transcription subunit 18 (215 aa).

Belongs to the Mediator complex subunit 18 family. In terms of assembly, component of the Mediator complex.

It is found in the nucleus. In terms of biological role, component of the Mediator complex, a coactivator involved in the regulated transcription of nearly all RNA polymerase II-dependent genes. Mediator functions as a bridge to convey information from gene-specific regulatory proteins to the basal RNA polymerase II transcription machinery. Mediator is recruited to promoters by direct interactions with regulatory proteins and serves as a scaffold for the assembly of a functional preinitiation complex with RNA polymerase II and the general transcription factors. The sequence is that of Mediator of RNA polymerase II transcription subunit 18 (MED18) from Aedes aegypti (Yellowfever mosquito).